The primary structure comprises 283 residues: NAD kinase (283 aa).

The active-site Proton acceptor is the aspartate 66. Residues 66-67, 140-141, arginine 151, lysine 168, aspartate 170, 181-186, and glutamine 240 each bind NAD(+); these read DG, ND, and TGYCLS.

It belongs to the NAD kinase family. Requires a divalent metal cation as cofactor.

Its subcellular location is the cytoplasm. The catalysed reaction is NAD(+) + ATP = ADP + NADP(+) + H(+). In terms of biological role, involved in the regulation of the intracellular balance of NAD and NADP, and is a key enzyme in the biosynthesis of NADP. Catalyzes specifically the phosphorylation on 2'-hydroxyl of the adenosine moiety of NAD to yield NADP. The chain is NAD kinase from Geobacter metallireducens (strain ATCC 53774 / DSM 7210 / GS-15).